A 505-amino-acid polypeptide reads, in one-letter code: Glycerol kinase (505 aa).

ADP is bound at residue Thr12. Residues Thr12, Thr13, and Ser14 each contribute to the ATP site. Thr12 provides a ligand contact to sn-glycerol 3-phosphate. Residue Arg16 participates in ADP binding. Positions 82, 83, 134, and 249 each coordinate sn-glycerol 3-phosphate. Glycerol is bound by residues Arg82, Glu83, Tyr134, Asp249, and Gln250. Residues Thr271 and Gly315 each coordinate ADP. 4 residues coordinate ATP: Thr271, Gly315, Gln319, and Gly416. Residues Gly416 and Asn420 each coordinate ADP.

Belongs to the FGGY kinase family.

It catalyses the reaction glycerol + ATP = sn-glycerol 3-phosphate + ADP + H(+). It functions in the pathway polyol metabolism; glycerol degradation via glycerol kinase pathway; sn-glycerol 3-phosphate from glycerol: step 1/1. Its activity is regulated as follows. Inhibited by fructose 1,6-bisphosphate (FBP). In terms of biological role, key enzyme in the regulation of glycerol uptake and metabolism. Catalyzes the phosphorylation of glycerol to yield sn-glycerol 3-phosphate. This Mycolicibacterium gilvum (strain PYR-GCK) (Mycobacterium gilvum (strain PYR-GCK)) protein is Glycerol kinase.